Reading from the N-terminus, the 1405-residue chain is MKSLLDLFKQFTPDEHFNAIKIGMASPEKIRSWSFGEVKKPETINYRTFKPERDGLFCAKIFGPIKDYECLCGKYKRLKHRGVICEKCGVEVTQTKVRRERMGHIDLAAPCAHIWFLKSLPSRLGLVLDMTLRDIERVLYFEAYVVTDPGMTPLKKFSIMSEDDFDAKFKEYGDEFQAKMGAEGIKDLLQSLDIDGSIERLRNDPTGSELKIKKNTKRLKLLEAFKKSGIKPEWMVLEVLPVLPPDLRPLVPLDGGRFATSDLNDLYRRVINRNSRLRRLLELKAPEIIARNEKRMLQEAVDSLLDNGRRGKAMTGANKRALKSLADMIKGKSGRFRQNLLGKRVDYSGRSVIVVGPTLKLHQCGLPKLMALELFKPFIFARLEAMGIATTIKAAKKEVESGTPVVWDILEEVIKEHPVMLNRAPTLHRLGIQAFEPILIEGKAIQLHPLVCAAFNADFDGDQMAVHVPLSVEAQVECRTLMLASNNVLFPSNGEPSIVPSQDVVLGLYYTTRERINGKGEGLIFADVGEVQRAFDGGAVELNSRINVRLTEYIKDKQTGELVPSTKLWETTAGRALLSEILPKGLPFENVNKALKKKEISKLINVSFRKCGLKETVVFADKLLQYGFRLATKAGISICLDDMLVPTEKPGIIEQAEQEVKEIAQQYTSGLVTSGERYNKVVDIWGKAGDEVSKVMMAQLSKEIVTDRHGQQVQQESFNSIYMMADSGARGSPAQIRQVAGMRGLMAKPDGSIIETPITANFREGLNVLEYFISTHGARKGLADTALKTANSGYLTRRLVDVTQDLVVTEQDCGTHSGYLMRAIVEGGEVIESLRDRILGRTAADDVLHPENRSVLAPAGTMLDEDQIDELEVAGVDEVKVRTALTCETRFGICAKCYGRDLGRGGLVNGGEAVGVIAAQSIGEPGTQLTMRTFHIGGAASRAAIASSVEAKSNGNIGFNATMRYVTNGKKELVVISRSGEIVIHDEHGRERERHKVPYGAVLAVKADQTIKSGAILANWDPLTRPIITEFAGKAHFENVEEGLTVAKQVDEVTGLSTMVVIDPKHRGSAKVIRPIVKLIDASGNEVKIPGTDHSVTIGFPIGALVQVRDGQDVSPGEVLARIPIEGQKTRDITGGLPRVAELFEARSPKDKGVLAEMTGTVSFGKETKGKIRLQITDPDGAVWEDLVPKEKNIIVHEGQVVNKGESVVDGPADPQDILRLLGSEELARYIVDEVQDVYRLQGVKINDKHIEVIVRQMLRRVVVENAGDSTYINGEQVERSEILNTNDALRADGKIPARFTNLLLGITKASLSTDSFISAASFQETTRVLTEAAIMGKRDELRGLKENVIVGRLIPAGTGMAYHEARKVRENMDDTERRAIAEAEAAELAGQAEATEANEGAAAE.

Zn(2+) is bound by residues C70, C72, C85, and C88. Mg(2+) is bound by residues D458, D460, and D462. Positions 813, 887, 894, and 897 each coordinate Zn(2+).

It belongs to the RNA polymerase beta' chain family. As to quaternary structure, the RNAP catalytic core consists of 2 alpha, 1 beta, 1 beta' and 1 omega subunit. When a sigma factor is associated with the core the holoenzyme is formed, which can initiate transcription. It depends on Mg(2+) as a cofactor. Zn(2+) is required as a cofactor.

It carries out the reaction RNA(n) + a ribonucleoside 5'-triphosphate = RNA(n+1) + diphosphate. DNA-dependent RNA polymerase catalyzes the transcription of DNA into RNA using the four ribonucleoside triphosphates as substrates. This Albidiferax ferrireducens (strain ATCC BAA-621 / DSM 15236 / T118) (Rhodoferax ferrireducens) protein is DNA-directed RNA polymerase subunit beta'.